A 92-amino-acid polypeptide reads, in one-letter code: Defensin-like protein 226 (92 aa).

A signal peptide spans 1–27 (MKCGVLFMISCLLITFLVLSHVREVES). 4 cysteine pairs are disulfide-bonded: Cys33-Cys92, Cys43-Cys71, Cys51-Cys86, and Cys69-Cys88.

This sequence belongs to the DEFL family.

Its subcellular location is the secreted. This is Defensin-like protein 226 (SCRL2) from Arabidopsis thaliana (Mouse-ear cress).